The sequence spans 255 residues: 3-dehydroquinate dehydratase (255 aa).

3-dehydroquinate contacts are provided by residues 47-49 (EWR) and arginine 83. The active-site Proton donor/acceptor is histidine 144. The Schiff-base intermediate with substrate role is filled by lysine 171. 3 residues coordinate 3-dehydroquinate: arginine 214, serine 233, and glutamine 237.

It belongs to the type-I 3-dehydroquinase family. In terms of assembly, homodimer or homotetramer.

It carries out the reaction 3-dehydroquinate = 3-dehydroshikimate + H2O. It functions in the pathway metabolic intermediate biosynthesis; chorismate biosynthesis; chorismate from D-erythrose 4-phosphate and phosphoenolpyruvate: step 3/7. Functionally, involved in the third step of the chorismate pathway, which leads to the biosynthesis of aromatic amino acids. Catalyzes the cis-dehydration of 3-dehydroquinate (DHQ) and introduces the first double bond of the aromatic ring to yield 3-dehydroshikimate. The reaction involves the formation of an imine intermediate between the keto group of 3-dehydroquinate and the epsilon-amino group of Lys-170 at the active site. In Clostridioides difficile (strain 630) (Peptoclostridium difficile), this protein is 3-dehydroquinate dehydratase.